The following is a 168-amino-acid chain: MGSAYHWEARRRQMALDRRRWLMAQQQQELQQKEQELKNHQEEEQQSEEKLQPHKKLNVPQPPVAKLWTSQEQPQPSQQQPSVQPPSQPPPQPSTLPQAQVWPGPQPPQPQPPPQPTQPSAQARCTQHTSKCNLQDSQRPGLMNPCQSSPIRNTGYSQLKSTNYIQQW.

The stretch at 16-50 (LDRRRWLMAQQQQELQQKEQELKNHQEEEQQSEEK) forms a coiled coil. The segment at 23–168 (MAQQQQELQQ…LKSTNYIQQW (146 aa)) is disordered. Basic and acidic residues predominate over residues 31–52 (QQKEQELKNHQEEEQQSEEKLQ). Residues 70–82 (SQEQPQPSQQQPS) are compositionally biased toward low complexity. 2 stretches are compositionally biased toward pro residues: residues 83–94 (VQPPSQPPPQPS) and 104–117 (GPQPPQPQPPPQPT). Polar residues-rich tracts occupy residues 124–138 (RCTQHTSKCNLQDSQ) and 145–168 (PCQSSPIRNTGYSQLKSTNYIQQW).

This is Coiled-coil domain-containing protein 200 from Homo sapiens (Human).